We begin with the raw amino-acid sequence, 438 residues long: Probable glycine dehydrogenase (decarboxylating) subunit 1 (438 aa).

The protein belongs to the GcvP family. N-terminal subunit subfamily. The glycine cleavage system is composed of four proteins: P, T, L and H. In this organism, the P 'protein' is a heterodimer of two subunits.

It catalyses the reaction N(6)-[(R)-lipoyl]-L-lysyl-[glycine-cleavage complex H protein] + glycine + H(+) = N(6)-[(R)-S(8)-aminomethyldihydrolipoyl]-L-lysyl-[glycine-cleavage complex H protein] + CO2. Its function is as follows. The glycine cleavage system catalyzes the degradation of glycine. The P protein binds the alpha-amino group of glycine through its pyridoxal phosphate cofactor; CO(2) is released and the remaining methylamine moiety is then transferred to the lipoamide cofactor of the H protein. This chain is Probable glycine dehydrogenase (decarboxylating) subunit 1, found in Syntrophomonas wolfei subsp. wolfei (strain DSM 2245B / Goettingen).